The chain runs to 345 residues: Dense granule protein 4 (345 aa).

The signal sequence occupies residues 1–20 (MQGTWFSLFVVVMVSHLACG). Residues 227-251 (SVSVSTEDSGLTGVKDSSSSESTVT) show a composition bias toward polar residues. Residues 227–271 (SVSVSTEDSGLTGVKDSSSSESTVTPADEAASESEEGDKTSRKSK) form a disordered region. Residues 276-296 (ILTGLGVAATLAAAAAAAKAV) form a helical membrane-spanning segment. Residues 298 to 345 (GFGGTRTSTAPAEAGKTELDDGYRPPPFNPRPSPYAELLKDLERMRKE) form a disordered region. Residues 321 to 330 (RPPPFNPRPS) show a composition bias toward pro residues. Basic and acidic residues predominate over residues 335–345 (LLKDLERMRKE).

In terms of processing, O-glycosylated.

It localises to the secreted. The protein localises to the parasitophorous vacuole lumen. It is found in the parasitophorous vacuole membrane. The protein resides in the cytoplasmic vesicle. Its subcellular location is the secretory vesicle. Major granular component involved in excreted-secreted antigen (ESA) immunity. The sequence is that of Dense granule protein 4 (GRA4) from Toxoplasma gondii.